Reading from the N-terminus, the 1147-residue chain is ATP-dependent helicase/deoxyribonuclease subunit B (1147 aa).

An ATP-binding site is contributed by 8-15 (GRAGSGKS). [4Fe-4S] cluster-binding residues include C786, C1106, C1109, and C1115.

This sequence belongs to the helicase family. AddB/RexB type 1 subfamily. Heterodimer of AddA and AddB. It depends on Mg(2+) as a cofactor. [4Fe-4S] cluster serves as cofactor.

In terms of biological role, the heterodimer acts as both an ATP-dependent DNA helicase and an ATP-dependent, dual-direction single-stranded exonuclease. Recognizes the chi site generating a DNA molecule suitable for the initiation of homologous recombination. The AddB subunit has 5' -&gt; 3' nuclease activity but not helicase activity. This is ATP-dependent helicase/deoxyribonuclease subunit B from Clostridium botulinum (strain Loch Maree / Type A3).